We begin with the raw amino-acid sequence, 416 residues long: Gamma-glutamyl phosphate reductase (416 aa).

Belongs to the gamma-glutamyl phosphate reductase family.

It is found in the cytoplasm. It carries out the reaction L-glutamate 5-semialdehyde + phosphate + NADP(+) = L-glutamyl 5-phosphate + NADPH + H(+). Its pathway is amino-acid biosynthesis; L-proline biosynthesis; L-glutamate 5-semialdehyde from L-glutamate: step 2/2. Catalyzes the NADPH-dependent reduction of L-glutamate 5-phosphate into L-glutamate 5-semialdehyde and phosphate. The product spontaneously undergoes cyclization to form 1-pyrroline-5-carboxylate. This is Gamma-glutamyl phosphate reductase from Streptococcus thermophilus (strain CNRZ 1066).